Reading from the N-terminus, the 277-residue chain is Urease accessory protein UreD (277 aa).

The protein belongs to the UreD family. As to quaternary structure, ureD, UreF and UreG form a complex that acts as a GTP-hydrolysis-dependent molecular chaperone, activating the urease apoprotein by helping to assemble the nickel containing metallocenter of UreC. The UreE protein probably delivers the nickel.

The protein localises to the cytoplasm. In terms of biological role, required for maturation of urease via the functional incorporation of the urease nickel metallocenter. This is Urease accessory protein UreD from Flavobacterium johnsoniae (strain ATCC 17061 / DSM 2064 / JCM 8514 / BCRC 14874 / CCUG 350202 / NBRC 14942 / NCIMB 11054 / UW101) (Cytophaga johnsonae).